We begin with the raw amino-acid sequence, 121 residues long: Large ribosomal subunit protein uL18 (121 aa).

This sequence belongs to the universal ribosomal protein uL18 family. As to quaternary structure, part of the 50S ribosomal subunit; part of the 5S rRNA/L5/L18/L25 subcomplex. Contacts the 5S and 23S rRNAs.

Its function is as follows. This is one of the proteins that bind and probably mediate the attachment of the 5S RNA into the large ribosomal subunit, where it forms part of the central protuberance. This Methylibium petroleiphilum (strain ATCC BAA-1232 / LMG 22953 / PM1) protein is Large ribosomal subunit protein uL18.